The chain runs to 158 residues: Ribonucleases P/MRP protein subunit POP6 (158 aa).

Residues Lys51–Arg71 are a coiled coil.

In terms of assembly, component of nuclear RNase P and RNase MRP complexes. RNase P consists of an RNA moiety and at least 9 protein subunits including POP1, POP3, POP4, POP5, POP6, POP7, POP8, RPP1 and RPR2. RNase MRP complex consists of an RNA moiety and at least 10 protein subunits including POP1, POP3, POP4, POP5, POP6, POP7, POP8, RMP1, RPP1 and SNM1, many of which are shared with the RNase P complex.

The protein localises to the nucleus. The enzyme catalyses Endonucleolytic cleavage of RNA, removing 5'-extranucleotides from tRNA precursor.. In terms of biological role, component of ribonuclease P, a protein complex that generates mature tRNA molecules by cleaving their 5'-ends. Also a component of RNase MRP, which cleaves pre-rRNA sequences. This Saccharomyces cerevisiae (strain ATCC 204508 / S288c) (Baker's yeast) protein is Ribonucleases P/MRP protein subunit POP6 (POP6).